The chain runs to 117 residues: Large ribosomal subunit protein uL18 (117 aa).

It belongs to the universal ribosomal protein uL18 family. Part of the 50S ribosomal subunit; part of the 5S rRNA/L5/L18/L25 subcomplex. Contacts the 5S and 23S rRNAs.

This is one of the proteins that bind and probably mediate the attachment of the 5S RNA into the large ribosomal subunit, where it forms part of the central protuberance. In Klebsiella pneumoniae (strain 342), this protein is Large ribosomal subunit protein uL18.